Consider the following 149-residue polypeptide: METQRASLCLGRWSLWLLLLGLVVPSASAQALSYREAVLRAVDRLNEQSSEANLYRLLELDQPPKADEDPGTPKPVSFTVKETVCPRPTRQPPELCDFKENGRVKQCVGTVTLDQIKDPLDITCNEVQGVRGGRLCYCRPRFCVCVGRG.

The N-terminal stretch at 1–29 (METQRASLCLGRWSLWLLLLGLVVPSASA) is a signal peptide. Positions 30-130 (QALSYREAVL…DITCNEVQGV (101 aa)) are excised as a propeptide. The tract at residues 61–80 (DQPPKADEDPGTPKPVSFTV) is disordered. 4 disulfides stabilise this stretch: cysteine 85–cysteine 96, cysteine 107–cysteine 124, cysteine 136–cysteine 145, and cysteine 138–cysteine 143. Arginine 148 is subject to Arginine amide.

It belongs to the cathelicidin family.

Its subcellular location is the secreted. Functionally, microbicidal activity. The protein is Protegrin-5 (NPG5) of Sus scrofa (Pig).